The following is a 140-amino-acid chain: Large ribosomal subunit protein uL16c (140 aa).

Belongs to the universal ribosomal protein uL16 family. As to quaternary structure, part of the 50S ribosomal subunit.

The protein resides in the plastid. Its subcellular location is the chloroplast. In Psilotum nudum (Whisk fern), this protein is Large ribosomal subunit protein uL16c.